A 293-amino-acid polypeptide reads, in one-letter code: Protease HtpX (293 aa).

The next 2 helical transmembrane spans lie at 4-24 and 38-58; these read IGLF…VLSL and LTNL…ISLF. H145 lines the Zn(2+) pocket. Residue E146 is part of the active site. Position 149 (H149) interacts with Zn(2+). The next 2 membrane-spanning stretches (helical) occupy residues 156–176 and 193–213; these read ITLS…ARII and IAFF…ASMI. E222 contributes to the Zn(2+) binding site.

This sequence belongs to the peptidase M48B family. It depends on Zn(2+) as a cofactor.

It localises to the cell inner membrane. This chain is Protease HtpX, found in Cellvibrio japonicus (strain Ueda107) (Pseudomonas fluorescens subsp. cellulosa).